A 59-amino-acid chain; its full sequence is Large ribosomal subunit protein uL30 (59 aa).

The protein belongs to the universal ribosomal protein uL30 family. In terms of assembly, part of the 50S ribosomal subunit.

This is Large ribosomal subunit protein uL30 from Buchnera aphidicola subsp. Acyrthosiphon kondoi (Acyrthosiphon kondoi symbiotic bacterium).